A 279-amino-acid chain; its full sequence is Undecaprenyl-diphosphatase (279 aa).

The next 8 membrane-spanning stretches (helical) occupy residues 2–22, 44–64, 85–105, 113–133, 163–183, 188–208, 223–243, and 255–275; these read LIIE…TEWL, AFIE…VMLI, WQLW…AVPL, FYFM…FIWI, VLSI…AIIL, TVAA…YSGL, AQVL…LLAI, and FTIF…YSFF.

Belongs to the UppP family.

The protein resides in the cell membrane. It carries out the reaction di-trans,octa-cis-undecaprenyl diphosphate + H2O = di-trans,octa-cis-undecaprenyl phosphate + phosphate + H(+). In terms of biological role, catalyzes the dephosphorylation of undecaprenyl diphosphate (UPP). Confers resistance to bacitracin. This Streptococcus pyogenes serotype M28 (strain MGAS6180) protein is Undecaprenyl-diphosphatase.